The chain runs to 314 residues: Aspartate carbamoyltransferase catalytic subunit (314 aa).

Residues Arg63 and Thr64 each coordinate carbamoyl phosphate. Residue Lys91 coordinates L-aspartate. Carbamoyl phosphate is bound by residues Arg113, His143, and Gln146. The L-aspartate site is built by Arg176 and Arg228. Positions 269 and 270 each coordinate carbamoyl phosphate.

This sequence belongs to the aspartate/ornithine carbamoyltransferase superfamily. ATCase family. As to quaternary structure, heterododecamer (2C3:3R2) of six catalytic PyrB chains organized as two trimers (C3), and six regulatory PyrI chains organized as three dimers (R2).

It catalyses the reaction carbamoyl phosphate + L-aspartate = N-carbamoyl-L-aspartate + phosphate + H(+). Its pathway is pyrimidine metabolism; UMP biosynthesis via de novo pathway; (S)-dihydroorotate from bicarbonate: step 2/3. Its function is as follows. Catalyzes the condensation of carbamoyl phosphate and aspartate to form carbamoyl aspartate and inorganic phosphate, the committed step in the de novo pyrimidine nucleotide biosynthesis pathway. This is Aspartate carbamoyltransferase catalytic subunit from Cutibacterium acnes (strain DSM 16379 / KPA171202) (Propionibacterium acnes).